Here is a 354-residue protein sequence, read N- to C-terminus: DNA-binding protein EMBP-1 (354 aa).

Disordered regions lie at residues 1 to 24 (MASSSSATSGDDRPPAAGGGTPAQ), 106 to 193 (SAAG…RSAS), and 230 to 273 (EVNA…RKQQ). 2 stretches are compositionally biased toward low complexity: residues 127 to 140 (SSSGSGDAGSQGSS) and 232 to 245 (NAAASSQSNASLSQ). Residues 246-265 (MDERELKRERRKQSNRESAR) show a composition bias toward basic and acidic residues. The region spanning 250-313 (ELKRERRKQS…KTMETENKKL (64 aa)) is the bZIP domain. The interval 252–271 (KRERRKQSNRESARRSRLRK) is basic motif. The leucine-zipper stretch occupies residues 278-299 (LAQKVSELTAANGTLRSELDQL).

Belongs to the bZIP family. As to quaternary structure, heterodimer.

It localises to the nucleus. Its function is as follows. Interacts specifically with the 8-bp sequence 5'-CACGTGGC-3'in the abscisic acid response element (ABARE). Also binds to the hexamer motif 5'-ACGTCA-3' of histone gene promoters. This is DNA-binding protein EMBP-1 from Triticum aestivum (Wheat).